A 432-amino-acid polypeptide reads, in one-letter code: Casein kinase II subunit alpha-4, chloroplastic (432 aa).

A chloroplast-targeting transit peptide spans 1–55 (MALRPCTGFTISSLRNASAANNNLFSLLSFSSSSPAKRNLLLSSLQDNLRRFASS). The segment at 63 to 83 (LRNQQQQHQQQQQSRVKEKSE) is disordered. The span at 66–75 (QQQQHQQQQQ) shows a compositional bias: low complexity. The Protein kinase domain occupies 132–417 (YEVVRKVGRG…AKEAMAHPYF (286 aa)). Residues 138 to 146 (VGRGKYSEV) and Lys161 each bind ATP. The active-site Proton acceptor is the Asp249.

This sequence belongs to the protein kinase superfamily. Ser/Thr protein kinase family. CK2 subfamily. As to quaternary structure, tetramer of two alpha and two beta chains. Expressed in root tips, lateral root primordia, cotyledons, leaf primordia, sepals, filaments, stigma, and anthers.

The protein resides in the plastid. It localises to the chloroplast. It carries out the reaction L-seryl-[protein] + ATP = O-phospho-L-seryl-[protein] + ADP + H(+). It catalyses the reaction L-threonyl-[protein] + ATP = O-phospho-L-threonyl-[protein] + ADP + H(+). Casein kinases are operationally defined by their preferential utilization of acidic proteins such as caseins as substrates. The alpha chain contains the catalytic site. Involved in the regulation of various developmental processes. Involved in the regulation of plant growth and flowering time. Involved in retrograde signaling in plant responses to abscisic acid (ABA) and heat stress. May act as an enhancing factor in abiotic stress signaling through modulation of the expression of some molecular players in retrograde signaling. Phosphorylates RuBisCo activase (RCA) at Thr-78. The polypeptide is Casein kinase II subunit alpha-4, chloroplastic (Arabidopsis thaliana (Mouse-ear cress)).